A 510-amino-acid chain; its full sequence is NAD(P)H-quinone oxidoreductase subunit 2 B, chloroplastic (510 aa).

12 helical membrane passes run 24-44 (LLLF…GLIL), 59-79 (WFYF…LFRW), 99-119 (IFQF…VEYI), 124-144 (MAIT…MFLC), 149-169 (LITI…LSGY), 183-203 (YLLM…WLYG), 229-249 (ISIA…PAPF), 295-315 (WHLL…LLAI), 323-343 (MLAY…IVGD), 354-374 (YMLF…LFGL), 395-415 (ALSL…AGFF), and 418-438 (LYLF…IGLL).

This sequence belongs to the complex I subunit 2 family. In terms of assembly, NDH is composed of at least 16 different subunits, 5 of which are encoded in the nucleus.

The protein localises to the plastid. It localises to the chloroplast thylakoid membrane. The catalysed reaction is a plastoquinone + NADH + (n+1) H(+)(in) = a plastoquinol + NAD(+) + n H(+)(out). It catalyses the reaction a plastoquinone + NADPH + (n+1) H(+)(in) = a plastoquinol + NADP(+) + n H(+)(out). In terms of biological role, NDH shuttles electrons from NAD(P)H:plastoquinone, via FMN and iron-sulfur (Fe-S) centers, to quinones in the photosynthetic chain and possibly in a chloroplast respiratory chain. The immediate electron acceptor for the enzyme in this species is believed to be plastoquinone. Couples the redox reaction to proton translocation, and thus conserves the redox energy in a proton gradient. The protein is NAD(P)H-quinone oxidoreductase subunit 2 B, chloroplastic of Lolium perenne (Perennial ryegrass).